Here is a 291-residue protein sequence, read N- to C-terminus: 2-C-methyl-D-erythritol 4-phosphate cytidylyltransferase (291 aa).

Positions 1–23 are disordered; the sequence is MTERDFDTPVETPTVQPAPAQGA.

It belongs to the IspD/TarI cytidylyltransferase family. IspD subfamily.

The catalysed reaction is 2-C-methyl-D-erythritol 4-phosphate + CTP + H(+) = 4-CDP-2-C-methyl-D-erythritol + diphosphate. It participates in isoprenoid biosynthesis; isopentenyl diphosphate biosynthesis via DXP pathway; isopentenyl diphosphate from 1-deoxy-D-xylulose 5-phosphate: step 2/6. In terms of biological role, catalyzes the formation of 4-diphosphocytidyl-2-C-methyl-D-erythritol from CTP and 2-C-methyl-D-erythritol 4-phosphate (MEP). The sequence is that of 2-C-methyl-D-erythritol 4-phosphate cytidylyltransferase from Bifidobacterium longum (strain NCC 2705).